Consider the following 230-residue polypeptide: Ribosomal RNA small subunit methyltransferase G (230 aa).

Residues Gly93, Leu98, Ile144–Glu145, and Arg158 contribute to the S-adenosyl-L-methionine site.

This sequence belongs to the methyltransferase superfamily. RNA methyltransferase RsmG family.

It is found in the cytoplasm. The catalysed reaction is guanosine(527) in 16S rRNA + S-adenosyl-L-methionine = N(7)-methylguanosine(527) in 16S rRNA + S-adenosyl-L-homocysteine. Functionally, specifically methylates the N7 position of guanine in position 527 of 16S rRNA. The protein is Ribosomal RNA small subunit methyltransferase G of Bordetella parapertussis (strain 12822 / ATCC BAA-587 / NCTC 13253).